A 238-amino-acid polypeptide reads, in one-letter code: Monocyte to macrophage differentiation factor (238 aa).

Over 1–28 (MRFRNRFQRFMNHRAPANGRYKPTCYEH) the chain is Cytoplasmic. Residues 29 to 49 (AANCYTHAFLIVPAIVGSALL) form a helical membrane-spanning segment. The Lumenal portion of the chain corresponds to 50-61 (HRLSDDCWEKIT). A helical transmembrane segment spans residues 62–82 (AWIYGMGLCALFIVSTVFHIV). At 83–101 (SWKKSHLRTVEHCFHMCDR) the chain is on the cytoplasmic side. Residues 102–122 (MVIYFFIAASYAPWLNLRELG) form a helical membrane-spanning segment. A topological domain (lumenal) is located at residue Pro123. The chain crosses the membrane as a helical span at residues 124 to 144 (LASHMRWFIWLMAAGGTIYVF). The Cytoplasmic portion of the chain corresponds to 145–151 (LYHEKYK). The chain crosses the membrane as a helical span at residues 152 to 172 (VVELFFYLTMGFSPALVVTSM). At 173–174 (NN) the chain is on the lumenal side. A helical transmembrane segment spans residues 175-195 (TDGLQELACGGLIYCLGVVFF). Topologically, residues 196–198 (KSD) are cytoplasmic. A helical transmembrane segment spans residues 199–219 (GIIPFAHAIWHLFVATAAAVH). Residues 220-238 (YYAIWKYLYRSPTDFIRHL) lie on the Lumenal side of the membrane.

Belongs to the ADIPOR family.

The protein localises to the late endosome membrane. It is found in the lysosome membrane. In terms of biological role, involved in the dynamics of lysosomal membranes associated with microglial activation following brain lesion. This chain is Monocyte to macrophage differentiation factor, found in Mus musculus (Mouse).